A 440-amino-acid chain; its full sequence is MKIINLLAYQILDSRGQPTVAVKLFLENDQSVIAMVPSGASTGAKEALELRDGDVNYFFNKSVKLAIQNINNIIRPHLINKNVLNFFELDNLLINLDGTENKSKLGANALLGVSIAIVKAGAIAASKPLYQYIKEDLMHNYDVNYYAPIPLMNFINGGAHADNDLDIQEFMIVPLNAISFSQAIQIGSEIFHQLDKLLKSNHLSTTKGDEGGFAPMLKNNYVTLELLVHAIKKAHYLPSKTQGVCLALDVAASELYENGKYFFKKSSSHNITLEQTSFSSDEWIKYWSKLVSMFPIISIEDCFEENDWNSFALFLKNNPHIQVVGDDLYCTNLKYLQKGIDFKATNAILIKPNQIGTISETLDVIKFAQKNNINTIISHRSGETEDTFIADLAIGVGAGQIKTGSLSRSERIAKYNRILEIEQELKDKLIYEPSKFFKFR.

Gln-168 lines the (2R)-2-phosphoglycerate pocket. The active-site Proton donor is Glu-210. Positions 249, 300, and 326 each coordinate Mg(2+). Residues Lys-351, Arg-380, Ser-381, and Lys-402 each contribute to the (2R)-2-phosphoglycerate site. The active-site Proton acceptor is the Lys-351.

This sequence belongs to the enolase family. It depends on Mg(2+) as a cofactor.

It localises to the cytoplasm. Its subcellular location is the secreted. It is found in the cell surface. The enzyme catalyses (2R)-2-phosphoglycerate = phosphoenolpyruvate + H2O. It functions in the pathway carbohydrate degradation; glycolysis; pyruvate from D-glyceraldehyde 3-phosphate: step 4/5. Functionally, catalyzes the reversible conversion of 2-phosphoglycerate (2-PG) into phosphoenolpyruvate (PEP). It is essential for the degradation of carbohydrates via glycolysis. The sequence is that of Enolase from Ureaplasma parvum serovar 3 (strain ATCC 27815 / 27 / NCTC 11736).